A 425-amino-acid polypeptide reads, in one-letter code: Glutamyl-tRNA reductase (425 aa).

Substrate is bound by residues 49–52, serine 109, 114–116, and glutamine 120; these read TCNR and EGQ. Cysteine 50 serves as the catalytic Nucleophile. 189 to 194 is a binding site for NADP(+); it reads GAGETG.

This sequence belongs to the glutamyl-tRNA reductase family. Homodimer.

It catalyses the reaction (S)-4-amino-5-oxopentanoate + tRNA(Glu) + NADP(+) = L-glutamyl-tRNA(Glu) + NADPH + H(+). The protein operates within porphyrin-containing compound metabolism; protoporphyrin-IX biosynthesis; 5-aminolevulinate from L-glutamyl-tRNA(Glu): step 1/2. It participates in porphyrin-containing compound metabolism; chlorophyll biosynthesis. Functionally, catalyzes the NADPH-dependent reduction of glutamyl-tRNA(Glu) to glutamate 1-semialdehyde (GSA). The protein is Glutamyl-tRNA reductase of Pelodictyon phaeoclathratiforme (strain DSM 5477 / BU-1).